The chain runs to 488 residues: NADH-quinone oxidoreductase subunit N 2 (488 aa).

The next 14 helical transmembrane spans lie at 18 to 38 (FLPE…ELFI), 45 to 65 (LVLN…LLIP), 81 to 101 (PLAV…LPFA), 110 to 130 (SFYG…FVLA), 135 to 155 (LIIL…LTAL), 169 to 189 (YLIL…FMYI), 210 to 230 (LVLG…AVPF), 242 to 262 (PTPV…IPLV), 274 to 294 (LVWT…GNLV), 308 to 328 (SSIA…VIGM), 331 to 351 (VIYF…VLAL), 375 to 395 (IAFA…TVGF), 412 to 434 (WLAF…LVVV), and 458 to 478 (FALT…WFLI).

It belongs to the complex I subunit 2 family. NDH-1 is composed of 14 different subunits. Subunits NuoA, H, J, K, L, M, N constitute the membrane sector of the complex.

It localises to the cell inner membrane. The catalysed reaction is a quinone + NADH + 5 H(+)(in) = a quinol + NAD(+) + 4 H(+)(out). In terms of biological role, NDH-1 shuttles electrons from NADH, via FMN and iron-sulfur (Fe-S) centers, to quinones in the respiratory chain. The immediate electron acceptor for the enzyme in this species is believed to be ubiquinone. Couples the redox reaction to proton translocation (for every two electrons transferred, four hydrogen ions are translocated across the cytoplasmic membrane), and thus conserves the redox energy in a proton gradient. This chain is NADH-quinone oxidoreductase subunit N 2, found in Aquifex aeolicus (strain VF5).